Here is a 127-residue protein sequence, read N- to C-terminus: Large ribosomal subunit protein bL17 (127 aa).

The protein belongs to the bacterial ribosomal protein bL17 family. In terms of assembly, part of the 50S ribosomal subunit. Contacts protein L32.

The polypeptide is Large ribosomal subunit protein bL17 (Xanthomonas campestris pv. campestris (strain 8004)).